A 512-amino-acid polypeptide reads, in one-letter code: Lysine--tRNA ligase (512 aa).

Residues Glu408 and Glu415 each contribute to the Mg(2+) site.

It belongs to the class-II aminoacyl-tRNA synthetase family. Homodimer. Mg(2+) is required as a cofactor.

The protein localises to the cytoplasm. It carries out the reaction tRNA(Lys) + L-lysine + ATP = L-lysyl-tRNA(Lys) + AMP + diphosphate. This is Lysine--tRNA ligase from Prochlorococcus marinus subsp. pastoris (strain CCMP1986 / NIES-2087 / MED4).